Here is a 207-residue protein sequence, read N- to C-terminus: NADH-ubiquinone oxidoreductase chain 6 (207 aa).

5 helical membrane passes run 15-35 (ILLDIISILSIISSIAIILVS), 40-60 (SILYLIILFINIAIYLYLIGI), 66-86 (LYILVYIGAIAVLFLFILSLF), 116-136 (LFILIIIIFYYNMINYFNNIY), and 184-204 (ILLIFISFLLLFSILSAIVLT).

The protein belongs to the complex I subunit 6 family.

It is found in the mitochondrion membrane. The enzyme catalyses a ubiquinone + NADH + 5 H(+)(in) = a ubiquinol + NAD(+) + 4 H(+)(out). Its function is as follows. Core subunit of the mitochondrial membrane respiratory chain NADH dehydrogenase (Complex I) that is believed to belong to the minimal assembly required for catalysis. Complex I functions in the transfer of electrons from NADH to the respiratory chain. The immediate electron acceptor for the enzyme is believed to be ubiquinone. This Wickerhamomyces canadensis (Yeast) protein is NADH-ubiquinone oxidoreductase chain 6 (ND6).